The following is a 341-amino-acid chain: Ribosomal RNA small subunit methyltransferase H (341 aa).

Residues 47-49 (GGY), Asp64, Phe91, Asp109, and Gln116 contribute to the S-adenosyl-L-methionine site.

This sequence belongs to the methyltransferase superfamily. RsmH family.

It localises to the cytoplasm. The enzyme catalyses cytidine(1402) in 16S rRNA + S-adenosyl-L-methionine = N(4)-methylcytidine(1402) in 16S rRNA + S-adenosyl-L-homocysteine + H(+). Functionally, specifically methylates the N4 position of cytidine in position 1402 (C1402) of 16S rRNA. The chain is Ribosomal RNA small subunit methyltransferase H from Rhizobium leguminosarum bv. trifolii (strain WSM1325).